The sequence spans 1164 residues: DNA-directed RNA polymerase 133 kDa polypeptide (1164 aa).

It belongs to the RNA polymerase beta chain family. As to quaternary structure, the DNA-dependent RNA polymerase used for intermediate and late genes expression consists of eight subunits 147 kDa, 133 kDa, 35 kDa, 30 kDa, 22 kDa, 19 kDa, 18 kDa and 7 kDa totalling more than 500 kDa in mass. The same holoenzyme, with the addition of the transcription-specificity factor RAP94, is used for early gene expression.

The protein localises to the virion. It catalyses the reaction RNA(n) + a ribonucleoside 5'-triphosphate = RNA(n+1) + diphosphate. Functionally, part of the DNA-dependent RNA polymerase which catalyzes the transcription of viral DNA into RNA using the four ribonucleoside triphosphates as substrates. Responsible for the transcription of early, intermediate and late genes. DNA-dependent RNA polymerase associates with the early transcription factor (ETF), itself composed of OPG118 and OPG133, thereby allowing the early genes transcription. Late transcription, and probably also intermediate transcription, require newly synthesized RNA polymerase. In Homo sapiens (Human), this protein is DNA-directed RNA polymerase 133 kDa polypeptide (OPG151).